A 257-amino-acid chain; its full sequence is Molybdate-binding protein ModA (257 aa).

A signal peptide spans 1–24 (MARKWLNLFAGAALSFAVAGNALA). 5 residues coordinate molybdate: Ser-36, Ser-63, Ala-149, Val-176, and Tyr-194.

It belongs to the bacterial solute-binding protein ModA family. As to quaternary structure, the complex is composed of two ATP-binding proteins (ModC), two transmembrane proteins (ModB) and a solute-binding protein (ModA).

The protein localises to the periplasm. Functionally, part of the ABC transporter complex ModABC involved in the transport of molybdenum into the cell. Binds molybdate with high affinity in vitro and with a similar affinity in vivo. Binds tungstate with high affinity in vitro. Binds unnatural anion perrhenate with high affinity in vitro. Does not bind sulfate, phosphate, arsenate, selenate, chlorate, metavanadate, nitrate, perchlorate, permanganate or carbonate. This is Molybdate-binding protein ModA (modA) from Escherichia coli (strain K12).